Here is a 938-residue protein sequence, read N- to C-terminus: Probable glutamyl endopeptidase, chloroplastic (938 aa).

Residues 1–54 constitute a chloroplast transit peptide; sequence MSSLTILLQRACLRFALLPVPPLRAPLRPPRRPLGLPRRSAMSSSAASRLSHIV. Positions 58-76 are enriched in low complexity; it reads GGAAGESSEPPAAAAAASG. Residues 58–77 form a disordered region; it reads GGAAGESSEPPAAAAAASGL. Active-site charge relay system residues include Ser762, Asp836, and His870. The segment covering 897 to 913 has biased composition (polar residues); sequence SSKTDSDSVADTENKTV. The interval 897 to 938 is disordered; sequence SSKTDSDSVADTENKTVSASGGGAPCEGPEAEGFSSMQRSLL.

It belongs to the peptidase S9D family.

It is found in the plastid. Its subcellular location is the chloroplast stroma. Functionally, serine-type protease active in vitro against the LHCII N-terminal. Cleaves its substrate on the carboxy-side of Glu residues. This chain is Probable glutamyl endopeptidase, chloroplastic (GEP), found in Oryza sativa subsp. japonica (Rice).